A 159-amino-acid chain; its full sequence is Phosphopantetheine adenylyltransferase (159 aa).

Thr-10 contributes to the substrate binding site. ATP-binding positions include Thr-10 to Phe-11 and His-18. Positions 42, 74, and 88 each coordinate substrate. ATP is bound by residues Gly-89–Arg-91, Glu-99, and Trp-124–Ser-130.

The protein belongs to the bacterial CoaD family. In terms of assembly, homohexamer. Mg(2+) serves as cofactor.

The protein resides in the cytoplasm. It catalyses the reaction (R)-4'-phosphopantetheine + ATP + H(+) = 3'-dephospho-CoA + diphosphate. Its pathway is cofactor biosynthesis; coenzyme A biosynthesis; CoA from (R)-pantothenate: step 4/5. Its function is as follows. Reversibly transfers an adenylyl group from ATP to 4'-phosphopantetheine, yielding dephospho-CoA (dPCoA) and pyrophosphate. This chain is Phosphopantetheine adenylyltransferase, found in Pectobacterium carotovorum subsp. carotovorum (strain PC1).